The primary structure comprises 304 residues: GTP cyclohydrolase FolE2 (304 aa).

Belongs to the GTP cyclohydrolase IV family.

The enzyme catalyses GTP + H2O = 7,8-dihydroneopterin 3'-triphosphate + formate + H(+). The protein operates within cofactor biosynthesis; 7,8-dihydroneopterin triphosphate biosynthesis; 7,8-dihydroneopterin triphosphate from GTP: step 1/1. In terms of biological role, converts GTP to 7,8-dihydroneopterin triphosphate. This chain is GTP cyclohydrolase FolE2, found in Chromohalobacter salexigens (strain ATCC BAA-138 / DSM 3043 / CIP 106854 / NCIMB 13768 / 1H11).